A 559-amino-acid polypeptide reads, in one-letter code: MAAQGFLLTASFLLILFVLARPLGVGLARLINDIPLPGTASVERLLWRGLGISTQEMDWKQYLLAILTLNLLGLTVLFLMLLGQNLLPLNPQQLPGLSWHLALNTAISFVTNTNWQSYGGETTLSYFSQMAGLTVQNFLSAATGIAVIFALIRAFTRQNIDTLGNAWMDLVRITLWILLPLALLIALLFIQQGALQNLLPYQSFTSVEGVKQLLPMGPVASQEAIKMLGTNGGGFFNANSSHPFENPSALTNMVQMLAIFLIPAALCFAFGDASGDRRQGQMLLWAMSIIFVVCVAVVMSAEVQGNPHLLKFGTDSSLNMEGKESRFGVLVSSLFAVVTTAASCGAVIAMHDSFTALGGMVPMWLMQIGEVVFGGVGSGLYGMLLFVLLAVFIAGLMIGRTPEYLGKKIDVREMKMTALAILITPTLVLLGTALAMMTETGRSGMLNPGPHGFSEVLYAVSSAANNNGSAFAGLNANTPFWNCLLAFCMFVGRFGVIIPVMAIAGSLVGKKRQPASPGTLPTHGALFVGLLIGTVLLVGALTFIPALALGPVAEHLSLY.

12 helical membrane passes run 5 to 25, 63 to 83, 132 to 152, 170 to 190, 250 to 270, 283 to 303, 329 to 349, 356 to 376, 379 to 399, 416 to 436, 484 to 504, and 524 to 544; these read GFLL…PLGV, LLAI…MLLG, GLTV…FALI, LVRI…LLFI, LTNM…CFAF, LLWA…SAEV, VLVS…AVIA, ALGG…FGGV, GLYG…LMIG, MTAL…ALAM, LLAF…MAIA, and GALF…LTFI.

This sequence belongs to the KdpA family. The system is composed of three essential subunits: KdpA, KdpB and KdpC.

The protein resides in the cell inner membrane. In terms of biological role, part of the high-affinity ATP-driven potassium transport (or Kdp) system, which catalyzes the hydrolysis of ATP coupled with the electrogenic transport of potassium into the cytoplasm. This subunit binds the periplasmic potassium ions and delivers the ions to the membrane domain of KdpB through an intramembrane tunnel. This Citrobacter koseri (strain ATCC BAA-895 / CDC 4225-83 / SGSC4696) protein is Potassium-transporting ATPase potassium-binding subunit.